The primary structure comprises 215 residues: Adenylate kinase (215 aa).

Position 10–15 (glycine 10–threonine 15) interacts with ATP. The interval serine 30–valine 60 is NMP. AMP is bound by residues threonine 31, arginine 36, glutamine 58 to valine 60, glycine 86 to arginine 89, and glutamine 93. The LID stretch occupies residues glycine 123–aspartate 160. ATP is bound by residues arginine 124 and threonine 133–tyrosine 134. Arginine 157 and arginine 168 together coordinate AMP. Lysine 201 is a binding site for ATP.

It belongs to the adenylate kinase family. As to quaternary structure, monomer.

Its subcellular location is the cytoplasm. It catalyses the reaction AMP + ATP = 2 ADP. The protein operates within purine metabolism; AMP biosynthesis via salvage pathway; AMP from ADP: step 1/1. Catalyzes the reversible transfer of the terminal phosphate group between ATP and AMP. Plays an important role in cellular energy homeostasis and in adenine nucleotide metabolism. The protein is Adenylate kinase of Aliivibrio salmonicida (strain LFI1238) (Vibrio salmonicida (strain LFI1238)).